The sequence spans 493 residues: Sorting nexin-4 (493 aa).

Positions 1–77 (MAVIDQDNFS…ILDCTVSDPH (77 aa)) are disordered. A compositionally biased stretch (polar residues) spans 7–28 (DNFSNISWHSEQNAESAASTAQ). Basic and acidic residues predominate over residues 56 to 65 (MEHDELDHSG). Residues 68–190 (ILDCTVSDPH…AFLESPDWNA (123 aa)) enclose the PX domain. Positions 111, 113, 137, and 156 each coordinate a 1,2-diacyl-sn-glycero-3-phospho-(1D-myo-inositol-3-phosphate). Coiled coils occupy residues 248-292 (EIKE…QKLI), 338-363 (SGTL…EYLN), and 405-442 (EQAR…QVSR).

Belongs to the sorting nexin family.

It is found in the cytoplasm. Its subcellular location is the membrane. The protein localises to the endosome membrane. In terms of biological role, sorting nexin, involved in the separation or division of vacuoles throughout the entire life cycle of the cells. Involved in retrieval of late-Golgi SNAREs from post-Golgi endosomes to the trans-Golgi network, for cytoplasm to vacuole transport (Cvt), and autophagy of large cargos including mitophagy, pexophagy and glycophagy. The sequence is that of Sorting nexin-4 (vsp-5) from Neurospora crassa (strain ATCC 24698 / 74-OR23-1A / CBS 708.71 / DSM 1257 / FGSC 987).